The following is a 78-amino-acid chain: Large ribosomal subunit protein eL38 (78 aa).

This sequence belongs to the eukaryotic ribosomal protein eL38 family.

The chain is Large ribosomal subunit protein eL38 (RpL38) from Maconellicoccus hirsutus (Pink hibiscus mealybug).